Consider the following 125-residue polypeptide: Oxytocin-neurophysin 1 (125 aa).

An N-terminal signal peptide occupies residues 1-19 (MAGSSLACCLLGLLALTSA). A disulfide bridge connects residues cysteine 20 and cysteine 25. Glycine 28 carries the post-translational modification Glycine amide. Intrachain disulfides connect cysteine 41–cysteine 85, cysteine 44–cysteine 58, cysteine 52–cysteine 75, cysteine 59–cysteine 65, cysteine 92–cysteine 104, cysteine 98–cysteine 116, and cysteine 105–cysteine 110.

Belongs to the vasopressin/oxytocin family. As to quaternary structure, interacts with oxytocin receptor (Ki=1.5 nM). Interacts with vasopressin V1aR/AVPR1A (Ki=37 nM), V1bR/AVPR1B (Ki=222 nM), and V2R/AVPR2 receptors (Ki=823 nM).

Its function is as follows. Neurophysin 1 specifically binds oxytocin. In terms of biological role, oxytocin causes contraction of the smooth muscle of the uterus and of the mammary gland. Acts by binding to oxytocin receptor (OXTR). The protein is Oxytocin-neurophysin 1 (OXT) of Ovis aries (Sheep).